Here is a 396-residue protein sequence, read N- to C-terminus: MTQSEKIINLTNHYGAHNYVPLPIVISEAEGVWVKDPEGNTYMDMLSAYSAVNQGHRHPRIIQALKDQADKVTLVSRAFHSDNLGQWHEKICKLAGKDKALPMNTGAEAVETALKAARRWAYDVKGIEPNKAEIIAFNGNFHGRTMAPVSLSSEAEYQRGYGPLLEGFRKVEFGDVNQLKAAINKNTAAILVEPIQGEAGINVPPEGYLKTIRELCDEHQILFIADEIQAGLGRSGKLFATDWDHVKPDVYILGKALGGGVFPISVVLADNEVLDVFTPGSHGSTFGGNPLASAVSIAAIDVIIDEDLPGRSLELGEYFKSELKKIEHPSIKEVRGRGLFIGIELHESARPYCEALKEQGLLCKETHDTVIRFAPPLVITKEELDMALEKIKSVFA.

Lys255 is modified (N6-(pyridoxal phosphate)lysine).

Belongs to the class-III pyridoxal-phosphate-dependent aminotransferase family. OAT subfamily. The cofactor is pyridoxal 5'-phosphate.

The protein resides in the cytoplasm. It catalyses the reaction a 2-oxocarboxylate + L-ornithine = L-glutamate 5-semialdehyde + an L-alpha-amino acid. It participates in amino-acid biosynthesis; L-proline biosynthesis; L-glutamate 5-semialdehyde from L-ornithine: step 1/1. Functionally, catalyzes the interconversion of ornithine to glutamate semialdehyde. This Staphylococcus epidermidis (strain ATCC 12228 / FDA PCI 1200) protein is Ornithine aminotransferase.